Reading from the N-terminus, the 393-residue chain is NAD(P)H-quinone oxidoreductase subunit H, chloroplastic (393 aa).

The protein belongs to the complex I 49 kDa subunit family. In terms of assembly, NDH is composed of at least 16 different subunits, 5 of which are encoded in the nucleus.

It is found in the plastid. It localises to the chloroplast thylakoid membrane. The enzyme catalyses a plastoquinone + NADH + (n+1) H(+)(in) = a plastoquinol + NAD(+) + n H(+)(out). The catalysed reaction is a plastoquinone + NADPH + (n+1) H(+)(in) = a plastoquinol + NADP(+) + n H(+)(out). NDH shuttles electrons from NAD(P)H:plastoquinone, via FMN and iron-sulfur (Fe-S) centers, to quinones in the photosynthetic chain and possibly in a chloroplast respiratory chain. The immediate electron acceptor for the enzyme in this species is believed to be plastoquinone. Couples the redox reaction to proton translocation, and thus conserves the redox energy in a proton gradient. This is NAD(P)H-quinone oxidoreductase subunit H, chloroplastic from Crucihimalaya wallichii (Rock-cress).